We begin with the raw amino-acid sequence, 330 residues long: Small ribosomal subunit protein mS35 (330 aa).

The tract at residues 50–73 is disordered; it reads AAGKGVRGQMKPRRQAGEPRTERM. A compositionally biased stretch (basic and acidic residues) spans 64–73; it reads QAGEPRTERM.

It belongs to the mitochondrion-specific ribosomal protein mS35 family. Component of the mitochondrial ribosome small subunit (28S) which comprises a 12S rRNA and about 30 distinct proteins.

The protein resides in the mitochondrion. The chain is Small ribosomal subunit protein mS35 (mrps35) from Danio rerio (Zebrafish).